Consider the following 39-residue polypeptide: Photosystem II reaction center protein L (39 aa).

Residues 16–37 (RTSLYLGLLLVAVLGILFSSYF) form a helical membrane-spanning segment.

This sequence belongs to the PsbL family. As to quaternary structure, PSII is composed of 1 copy each of membrane proteins PsbA, PsbB, PsbC, PsbD, PsbE, PsbF, PsbH, PsbI, PsbJ, PsbK, PsbL, PsbM, PsbT, PsbX, PsbY, PsbZ, Psb30/Ycf12, peripheral proteins PsbO, CyanoQ (PsbQ), PsbU, PsbV and a large number of cofactors. It forms dimeric complexes.

It is found in the cellular thylakoid membrane. Functionally, one of the components of the core complex of photosystem II (PSII). PSII is a light-driven water:plastoquinone oxidoreductase that uses light energy to abstract electrons from H(2)O, generating O(2) and a proton gradient subsequently used for ATP formation. It consists of a core antenna complex that captures photons, and an electron transfer chain that converts photonic excitation into a charge separation. This subunit is found at the monomer-monomer interface and is required for correct PSII assembly and/or dimerization. Required for PSII activity, at least in part due to its effects on PSII assembly. May make specific contact(s) with lipids. The chain is Photosystem II reaction center protein L from Synechocystis sp. (strain ATCC 27184 / PCC 6803 / Kazusa).